The following is a 384-amino-acid chain: Multidrug/solvent efflux pump periplasmic linker protein MepA (384 aa).

An N-terminal signal peptide occupies residues 1–22; the sequence is MQFKPAVTALVSAVALATLLSG. A lipid anchor (N-palmitoyl cysteine) is attached at C23. Residue C23 is the site of S-diacylglycerol cysteine attachment. Positions 115 to 155 form a coiled coil; the sequence is LAERYKQLIDEQAVSKQEYDDANAKRLQAEASLKSAQIDLR. A disordered region spans residues 362-384; that stretch reads ATNVKKPAGPDQANAAKADAKAE. A compositionally biased stretch (low complexity) spans 368–378; the sequence is PAGPDQANAAK.

It belongs to the membrane fusion protein (MFP) (TC 8.A.1) family.

The protein resides in the cell inner membrane. Its function is as follows. The periplasmic linker protein component of an organic solvent and antibiotic efflux pump; confers resistance to toluene, hexane, p-xylene, ampicillin, penicillin G, erythromycin, novobiocin and tetracycline. The polypeptide is Multidrug/solvent efflux pump periplasmic linker protein MepA (mepA) (Pseudomonas putida (Arthrobacter siderocapsulatus)).